The sequence spans 89 residues: Large ribosomal subunit protein uL24 (89 aa).

The protein belongs to the universal ribosomal protein uL24 family. In terms of assembly, part of the 50S ribosomal subunit.

One of two assembly initiator proteins, it binds directly to the 5'-end of the 23S rRNA, where it nucleates assembly of the 50S subunit. In terms of biological role, one of the proteins that surrounds the polypeptide exit tunnel on the outside of the subunit. The sequence is that of Large ribosomal subunit protein uL24 from Oenococcus oeni (strain ATCC BAA-331 / PSU-1).